The primary structure comprises 119 residues: Ribonuclease P protein component (119 aa).

The protein belongs to the RnpA family. Consists of a catalytic RNA component (M1 or rnpB) and a protein subunit.

It carries out the reaction Endonucleolytic cleavage of RNA, removing 5'-extranucleotides from tRNA precursor.. RNaseP catalyzes the removal of the 5'-leader sequence from pre-tRNA to produce the mature 5'-terminus. It can also cleave other RNA substrates such as 4.5S RNA. The protein component plays an auxiliary but essential role in vivo by binding to the 5'-leader sequence and broadening the substrate specificity of the ribozyme. The protein is Ribonuclease P protein component of Sodalis glossinidius (strain morsitans).